Reading from the N-terminus, the 268-residue chain is Undecaprenyl-diphosphatase (268 aa).

7 helical membrane-spanning segments follow: residues phenylalanine 47–leucine 67, phenylalanine 83–lysine 103, leucine 109–valine 129, tyrosine 144–valine 164, alanine 184–phenylalanine 204, leucine 218–leucine 238, and phenylalanine 246–leucine 266.

The protein belongs to the UppP family.

It localises to the cell inner membrane. The catalysed reaction is di-trans,octa-cis-undecaprenyl diphosphate + H2O = di-trans,octa-cis-undecaprenyl phosphate + phosphate + H(+). Functionally, catalyzes the dephosphorylation of undecaprenyl diphosphate (UPP). Confers resistance to bacitracin. The sequence is that of Undecaprenyl-diphosphatase from Bradyrhizobium sp. (strain BTAi1 / ATCC BAA-1182).